Consider the following 1791-residue polypeptide: Brefeldin A-inhibited guanine nucleotide-exchange protein 2 (1791 aa).

Methionine 1 carries the N-acetylmethionine modification. The segment at 2-224 (QESQTKSMFV…KPQSPVIQAT (223 aa)) is DCB; DCB:DCB domain and DCB:HUS domain interaction. Disordered stretches follow at residues 208–292 (LEKP…DNGA) and 311–350 (AAEKQGLPEPDQAPGVPECQECTVPPAVDENSQTNGIADD). Phosphoserine is present on residues serine 214, serine 218, and serine 227. Residues 214-225 (SKPQSPVIQATA) are compositionally biased toward polar residues. Over residues 233–243 (LKQSQAQSKPT) the composition is skewed to polar residues. Position 244 is a phosphothreonine (threonine 244). Residues 244 to 257 (TPEKTELPNGDHAR) are compositionally biased toward basic and acidic residues. Serine 277 is modified (phosphoserine). A phosphoserine mark is found at serine 355 and serine 356. The segment at 515–535 (ADAQCVVDIYVNYDCDLNAAN) is HUS; DCB:HUS domain interaction. Position 621 is a phosphoserine (serine 621). Position 623 is a phosphothreonine (threonine 623). Serine 624 bears the Phosphoserine mark. Residue threonine 633 is modified to Phosphothreonine. The SEC7 domain maps to 661–792 (FNKKPKRGIQ…IIMLTTDLHS (132 aa)). Serine 707, serine 1518, serine 1520, serine 1521, serine 1532, serine 1535, serine 1541, and serine 1788 each carry phosphoserine.

As to quaternary structure, homodimer. Interacts with ARFGEF1/BIG1; both proteins are probably part of the same or very similar macromolecular complexes. Interacts with PRKAR1A, PRKAR2A, PRKAR1B, PRKAR2B, PPP1CC, PDE3A, TNFRSF1A, MYCBP and EXOC7. Interacts with GABRB1, GABRB2 and GABRB3. Post-translationally, in vitro phosphorylated by PKA reducing its GEF activity and dephosphorylated by phosphatase PP1. In terms of tissue distribution, expressed in brain (at protein level).

Its subcellular location is the cytoplasm. It is found in the membrane. The protein localises to the golgi apparatus. It localises to the perinuclear region. The protein resides in the trans-Golgi network. Its subcellular location is the endosome. It is found in the cytoskeleton. The protein localises to the microtubule organizing center. It localises to the centrosome. The protein resides in the cell projection. Its subcellular location is the dendrite. It is found in the cytoplasmic vesicle. The protein localises to the synapse. Inhibited by brefeldin A. Functionally, promotes guanine-nucleotide exchange on ARF1 and ARF3 and to a lower extent on ARF5 and ARF6. Promotes the activation of ARF1/ARF5/ARF6 through replacement of GDP with GTP. Involved in the regulation of Golgi vesicular transport. Required for the integrity of the endosomal compartment. Involved in trafficking from the trans-Golgi network (TGN) to endosomes and is required for membrane association of the AP-1 complex and GGA1. Seems to be involved in recycling of the transferrin receptor from recycling endosomes to the plasma membrane. Probably is involved in the exit of GABA(A) receptors from the endoplasmic reticulum. Involved in constitutive release of tumor necrosis factor receptor 1 via exosome-like vesicles; the function seems to involve PKA and specifically PRKAR2B. Proposed to act as A kinase-anchoring protein (AKAP) and may mediate crosstalk between Arf and PKA pathways. The polypeptide is Brefeldin A-inhibited guanine nucleotide-exchange protein 2 (Arfgef2) (Rattus norvegicus (Rat)).